Consider the following 270-residue polypeptide: Formamidopyrimidine-DNA glycosylase (270 aa).

The Schiff-base intermediate with DNA role is filled by Pro2. Residue Glu3 is the Proton donor of the active site. The active-site Proton donor; for beta-elimination activity is Lys58. The DNA site is built by His91, Arg109, and Arg151. The segment at 236-270 (QVYGKTGQQCPSCETPLKAVKLAARASVYCPECQS) adopts an FPG-type zinc-finger fold. Arg260 acts as the Proton donor; for delta-elimination activity in catalysis.

The protein belongs to the FPG family. As to quaternary structure, monomer. Zn(2+) serves as cofactor.

The catalysed reaction is Hydrolysis of DNA containing ring-opened 7-methylguanine residues, releasing 2,6-diamino-4-hydroxy-5-(N-methyl)formamidopyrimidine.. It catalyses the reaction 2'-deoxyribonucleotide-(2'-deoxyribose 5'-phosphate)-2'-deoxyribonucleotide-DNA = a 3'-end 2'-deoxyribonucleotide-(2,3-dehydro-2,3-deoxyribose 5'-phosphate)-DNA + a 5'-end 5'-phospho-2'-deoxyribonucleoside-DNA + H(+). Involved in base excision repair of DNA damaged by oxidation or by mutagenic agents. Acts as a DNA glycosylase that recognizes and removes damaged bases. Has a preference for oxidized purines, such as 7,8-dihydro-8-oxoguanine (8-oxoG). Has AP (apurinic/apyrimidinic) lyase activity and introduces nicks in the DNA strand. Cleaves the DNA backbone by beta-delta elimination to generate a single-strand break at the site of the removed base with both 3'- and 5'-phosphates. This Psychromonas ingrahamii (strain DSM 17664 / CCUG 51855 / 37) protein is Formamidopyrimidine-DNA glycosylase.